The chain runs to 359 residues: Peptide chain release factor 1 (359 aa).

Glutamine 235 bears the N5-methylglutamine mark.

It belongs to the prokaryotic/mitochondrial release factor family. Methylated by PrmC. Methylation increases the termination efficiency of RF1.

The protein resides in the cytoplasm. Peptide chain release factor 1 directs the termination of translation in response to the peptide chain termination codons UAG and UAA. This is Peptide chain release factor 1 from Aromatoleum aromaticum (strain DSM 19018 / LMG 30748 / EbN1) (Azoarcus sp. (strain EbN1)).